The chain runs to 65 residues: Large ribosomal subunit protein bL35 (65 aa).

This sequence belongs to the bacterial ribosomal protein bL35 family.

The polypeptide is Large ribosomal subunit protein bL35 (Psychrobacter arcticus (strain DSM 17307 / VKM B-2377 / 273-4)).